The following is a 255-amino-acid chain: Putative mediator of RNA polymerase II transcription subunit 30 (255 aa).

A compositionally biased stretch (low complexity) spans 58 to 107 (QSQQLQQPQSIPSSTNNSTNTNTNNSTTTTTTSSTSSTTTPTTTTSTTSP). Disordered stretches follow at residues 58–133 (QSQQ…TLNL) and 177–207 (NIDN…IEKQ). A compositionally biased stretch (polar residues) spans 108–133 (LNSKDSTATTTTKEQPSSPTLPTLNL). The span at 177 to 189 (NIDNDDTIMKDDN) shows a compositional bias: basic and acidic residues. A compositionally biased stretch (low complexity) spans 190 to 201 (NNSSTSAPTTTT).

This sequence belongs to the Mediator complex subunit 30 family. Highly divergent. In terms of assembly, component of the Mediator complex.

The protein localises to the nucleus. Functionally, component of the Mediator complex, a coactivator involved in the regulated transcription of nearly all RNA polymerase II-dependent genes. Mediator functions as a bridge to convey information from gene-specific regulatory proteins to the basal RNA polymerase II transcription machinery. Mediator is recruited to promoters by direct interactions with regulatory proteins and serves as a scaffold for the assembly of a functional preinitiation complex with RNA polymerase II and the general transcription factors. The sequence is that of Putative mediator of RNA polymerase II transcription subunit 30 (med30) from Dictyostelium discoideum (Social amoeba).